We begin with the raw amino-acid sequence, 84 residues long: Putative defensin-like protein 165 (84 aa).

The first 27 residues, 1–27 (MSTKLFSYFMLLVVLFSVLTIIPKTEA), serve as a signal peptide directing secretion. 4 disulfides stabilise this stretch: cysteine 31/cysteine 78, cysteine 41/cysteine 60, cysteine 46/cysteine 72, and cysteine 50/cysteine 74.

It belongs to the DEFL family.

It is found in the secreted. This is Putative defensin-like protein 165 (LCR12) from Arabidopsis thaliana (Mouse-ear cress).